A 461-amino-acid polypeptide reads, in one-letter code: Bifunctional protein HldE (461 aa).

The ribokinase stretch occupies residues 1-312 (MLEFLSQQKP…IKSFKRVDFE (312 aa)). Residue 191-194 (NKKE) coordinates ATP. Residue Asp-259 is part of the active site. The segment at 334–461 (FTNGCFDIVH…KIIEKIKDKK (128 aa)) is cytidylyltransferase.

This sequence in the N-terminal section; belongs to the carbohydrate kinase PfkB family. In the C-terminal section; belongs to the cytidylyltransferase family. As to quaternary structure, homodimer.

The catalysed reaction is D-glycero-beta-D-manno-heptose 7-phosphate + ATP = D-glycero-beta-D-manno-heptose 1,7-bisphosphate + ADP + H(+). It catalyses the reaction D-glycero-beta-D-manno-heptose 1-phosphate + ATP + H(+) = ADP-D-glycero-beta-D-manno-heptose + diphosphate. It participates in nucleotide-sugar biosynthesis; ADP-L-glycero-beta-D-manno-heptose biosynthesis; ADP-L-glycero-beta-D-manno-heptose from D-glycero-beta-D-manno-heptose 7-phosphate: step 1/4. It functions in the pathway nucleotide-sugar biosynthesis; ADP-L-glycero-beta-D-manno-heptose biosynthesis; ADP-L-glycero-beta-D-manno-heptose from D-glycero-beta-D-manno-heptose 7-phosphate: step 3/4. The protein operates within bacterial outer membrane biogenesis; LOS core biosynthesis. Catalyzes the phosphorylation of D-glycero-D-manno-heptose 7-phosphate at the C-1 position to selectively form D-glycero-beta-D-manno-heptose-1,7-bisphosphate. In terms of biological role, catalyzes the ADP transfer from ATP to D-glycero-beta-D-manno-heptose 1-phosphate, yielding ADP-D-glycero-beta-D-manno-heptose. In Campylobacter jejuni subsp. jejuni serotype O:2 (strain ATCC 700819 / NCTC 11168), this protein is Bifunctional protein HldE (hldE).